We begin with the raw amino-acid sequence, 247 residues long: Anamorsin homolog (247 aa).

The tract at residues 4–128 (FKGLQKSLYI…ETGSSARLSF (125 aa)) is N-terminal SAM-like domain. The interval 129-160 (AKKNASALNVWKISGDDEELIDEEDLLDEEDK) is linker. [2Fe-2S] cluster-binding residues include cysteine 171, cysteine 180, cysteine 183, and cysteine 185. Positions 171 to 185 (CSTTGKRKACKNCSC) are fe-S binding site A. [4Fe-4S] cluster is bound by residues cysteine 208, cysteine 211, cysteine 219, and cysteine 222. 2 consecutive short sequence motifs (cx2C motif) follow at residues 208–211 (CGNC) and 219–222 (CSTC). The interval 208–222 (CGNCYLGDAFRCSTC) is fe-S binding site B.

Belongs to the anamorsin family. As to quaternary structure, monomer. [2Fe-2S] cluster is required as a cofactor. [4Fe-4S] cluster serves as cofactor.

The protein resides in the cytoplasm. It is found in the mitochondrion intermembrane space. Its function is as follows. Component of the cytosolic iron-sulfur (Fe-S) protein assembly (CIA) machinery. Required for the maturation of extramitochondrial Fe-S proteins. Part of an electron transfer chain functioning in an early step of cytosolic Fe-S biogenesis, facilitating the de novo assembly of a [4Fe-4S] cluster on the cytosolic Fe-S scaffold complex. Electrons are transferred from NADPH via a FAD- and FMN-containing diflavin oxidoreductase. Together with the diflavin oxidoreductase, also required for the assembly of the diferric tyrosyl radical cofactor of ribonucleotide reductase (RNR), probably by providing electrons for reduction during radical cofactor maturation in the catalytic small subunit. This Drosophila persimilis (Fruit fly) protein is Anamorsin homolog.